The primary structure comprises 477 residues: V-type ATP synthase beta chain (477 aa).

It belongs to the ATPase alpha/beta chains family.

In terms of biological role, produces ATP from ADP in the presence of a proton gradient across the membrane. The V-type beta chain is a regulatory subunit. The sequence is that of V-type ATP synthase beta chain from Anaeromyxobacter dehalogenans (strain 2CP-1 / ATCC BAA-258).